Consider the following 403-residue polypeptide: Probable eukaryotic initiation factor 4A (403 aa).

A disordered region spans residues 1–29 (MSQQDRVAPQDQDSFLDDQPGVRPIPSFD). A Q motif motif is present at residues 26–54 (PSFDDMPLHQNLLRGIYSYGFEKPSSIQQ). Positions 57 to 230 (IAPFTRGGDI…KKFMRDPVRI (174 aa)) constitute a Helicase ATP-binding domain. 70–77 (AQSGTGKT) is a binding site for ATP. The DEAD box motif lies at 178–181 (DEAD). One can recognise a Helicase C-terminal domain in the interval 241 to 401 (GIKQFFIAVE…ELPVDFAAYL (161 aa)).

It belongs to the DEAD box helicase family. eIF4A subfamily. In terms of assembly, eIF4F is a multi-subunit complex, the composition of which varies with external and internal environmental conditions. It is composed of at least EIF4A, EIF4E and EIF4G.

The catalysed reaction is ATP + H2O = ADP + phosphate + H(+). Functionally, ATP-dependent RNA helicase which is a subunit of the eIF4F complex involved in cap recognition and is required for mRNA binding to ribosome. In the current model of translation initiation, eIF4A unwinds RNA secondary structures in the 5'-UTR of mRNAs which is necessary to allow efficient binding of the small ribosomal subunit, and subsequent scanning for the initiator codon. This is Probable eukaryotic initiation factor 4A from Leishmania braziliensis.